A 212-amino-acid polypeptide reads, in one-letter code: METHMAKPKAPAGIENPVQLAVIGAAHGIKGEVRVKTFTEDPMALGSYGPLHMVDGRVLQVAAIRPAKEVVIVRFKGVDGRNAAEALNGEALFVDRSALPEKLEEEEFYYADLIGMAVLDEKGENLGRVVAVHNFGAGDLLEFRENSGPTVIIPFTRDAVPDIDLSNNTIRIDSITAGLDNAELSGEEDEAEGPESARGSRPRGPKSAGEPR.

A PRC barrel domain is found at 105 to 181 (EEEFYYADLI…IDSITAGLDN (77 aa)). Residues 181 to 212 (NAELSGEEDEAEGPESARGSRPRGPKSAGEPR) form a disordered region.

Belongs to the RimM family. Binds ribosomal protein uS19.

It localises to the cytoplasm. An accessory protein needed during the final step in the assembly of 30S ribosomal subunit, possibly for assembly of the head region. Essential for efficient processing of 16S rRNA. May be needed both before and after RbfA during the maturation of 16S rRNA. It has affinity for free ribosomal 30S subunits but not for 70S ribosomes. The chain is Ribosome maturation factor RimM from Chelativorans sp. (strain BNC1).